A 900-amino-acid chain; its full sequence is DNA mismatch repair protein MutS (900 aa).

The tract at residues 1-88 (MPGPSDDPTE…PAWAHHSQVD (88 aa)) is disordered. Over residues 56 to 68 (APADHNAADHDSN) the composition is skewed to basic and acidic residues. Residue 714–721 (GPNASGKS) coordinates ATP.

The protein belongs to the DNA mismatch repair MutS family.

Its function is as follows. This protein is involved in the repair of mismatches in DNA. It is possible that it carries out the mismatch recognition step. This protein has a weak ATPase activity. In Parasynechococcus marenigrum (strain WH8102), this protein is DNA mismatch repair protein MutS.